The primary structure comprises 184 residues: UPF0316 protein BLi00691/BL01474 (184 aa).

3 helical membrane passes run 9–29, 41–61, and 67–87; these read GVIMVGIILVINIIYVTFLTL, LAAFIGTIEMLVYVVGLGLVL, and IQNVIAYAVGFGIGIIVGTKI.

The protein belongs to the UPF0316 family.

The protein resides in the cell membrane. This chain is UPF0316 protein BLi00691/BL01474, found in Bacillus licheniformis (strain ATCC 14580 / DSM 13 / JCM 2505 / CCUG 7422 / NBRC 12200 / NCIMB 9375 / NCTC 10341 / NRRL NRS-1264 / Gibson 46).